Consider the following 397-residue polypeptide: Elongation factor Tu-1 (397 aa).

The tr-type G domain maps to 10-206; sequence KPHVNIGTIG…AVDESIPEPE (197 aa). The tract at residues 19-26 is G1; it reads GHIDHGKT. 19 to 26 lines the GTP pocket; the sequence is GHIDHGKT. T26 provides a ligand contact to Mg(2+). The G2 stretch occupies residues 62 to 66; the sequence is GITIS. The tract at residues 83 to 86 is G3; that stretch reads DCPG. GTP is bound by residues 83 to 87 and 138 to 141; these read DCPGH and NKAD. Residues 138-141 are G4; that stretch reads NKAD. The G5 stretch occupies residues 176-178; that stretch reads SAL.

The protein belongs to the TRAFAC class translation factor GTPase superfamily. Classic translation factor GTPase family. EF-Tu/EF-1A subfamily. Monomer.

The protein localises to the cytoplasm. It carries out the reaction GTP + H2O = GDP + phosphate + H(+). In terms of biological role, GTP hydrolase that promotes the GTP-dependent binding of aminoacyl-tRNA to the A-site of ribosomes during protein biosynthesis. In Streptomyces ramocissimus, this protein is Elongation factor Tu-1.